Here is a 1241-residue protein sequence, read N- to C-terminus: ATP-dependent helicase/nuclease subunit A (1241 aa).

A UvrD-like helicase ATP-binding domain is found at 12–485 (SQWTDDQWKA…IDLAKNFRSR (474 aa)). Residue 33-40 (AAAGSGKT) participates in ATP binding. A UvrD-like helicase C-terminal domain is found at 505–805 (GEIDYDADAE…RIMTIHKSKG (301 aa)).

Belongs to the helicase family. AddA subfamily. As to quaternary structure, heterodimer of AddA and AddB/RexB. Mg(2+) serves as cofactor.

The catalysed reaction is Couples ATP hydrolysis with the unwinding of duplex DNA by translocating in the 3'-5' direction.. It carries out the reaction ATP + H2O = ADP + phosphate + H(+). Functionally, the heterodimer acts as both an ATP-dependent DNA helicase and an ATP-dependent, dual-direction single-stranded exonuclease. Recognizes the chi site generating a DNA molecule suitable for the initiation of homologous recombination. The AddA nuclease domain is required for chi fragment generation; this subunit has the helicase and 3' -&gt; 5' nuclease activities. The polypeptide is ATP-dependent helicase/nuclease subunit A (Bacillus thuringiensis (strain Al Hakam)).